The chain runs to 238 residues: Ribonuclease PH (238 aa).

Residues Arg86 and 124-126 contribute to the phosphate site; that span reads GTR.

It belongs to the RNase PH family. As to quaternary structure, homohexameric ring arranged as a trimer of dimers.

It catalyses the reaction tRNA(n+1) + phosphate = tRNA(n) + a ribonucleoside 5'-diphosphate. In terms of biological role, phosphorolytic 3'-5' exoribonuclease that plays an important role in tRNA 3'-end maturation. Removes nucleotide residues following the 3'-CCA terminus of tRNAs; can also add nucleotides to the ends of RNA molecules by using nucleoside diphosphates as substrates, but this may not be physiologically important. Probably plays a role in initiation of 16S rRNA degradation (leading to ribosome degradation) during starvation. The chain is Ribonuclease PH from Aliivibrio salmonicida (strain LFI1238) (Vibrio salmonicida (strain LFI1238)).